We begin with the raw amino-acid sequence, 143 residues long: Auxin-responsive protein SAUR67 (143 aa).

It belongs to the ARG7 family.

It localises to the cell membrane. Functionally, may promote auxin-stimulated organ elongation, such as hypocotyls, stamen filaments and petals. This Arabidopsis thaliana (Mouse-ear cress) protein is Auxin-responsive protein SAUR67.